A 251-amino-acid chain; its full sequence is Ubiquinone/menaquinone biosynthesis C-methyltransferase UbiE (251 aa).

Residues threonine 74, aspartate 95, 123-124 (NA), and serine 140 each bind S-adenosyl-L-methionine.

Belongs to the class I-like SAM-binding methyltransferase superfamily. MenG/UbiE family.

It catalyses the reaction a 2-demethylmenaquinol + S-adenosyl-L-methionine = a menaquinol + S-adenosyl-L-homocysteine + H(+). The catalysed reaction is a 2-methoxy-6-(all-trans-polyprenyl)benzene-1,4-diol + S-adenosyl-L-methionine = a 5-methoxy-2-methyl-3-(all-trans-polyprenyl)benzene-1,4-diol + S-adenosyl-L-homocysteine + H(+). The protein operates within quinol/quinone metabolism; menaquinone biosynthesis; menaquinol from 1,4-dihydroxy-2-naphthoate: step 2/2. It functions in the pathway cofactor biosynthesis; ubiquinone biosynthesis. Functionally, methyltransferase required for the conversion of demethylmenaquinol (DMKH2) to menaquinol (MKH2) and the conversion of 2-polyprenyl-6-methoxy-1,4-benzoquinol (DDMQH2) to 2-polyprenyl-3-methyl-6-methoxy-1,4-benzoquinol (DMQH2). This Salmonella arizonae (strain ATCC BAA-731 / CDC346-86 / RSK2980) protein is Ubiquinone/menaquinone biosynthesis C-methyltransferase UbiE.